A 201-amino-acid chain; its full sequence is Heat shock protein beta-1 (201 aa).

S15 is modified (phosphoserine; by PKA and PKC). Residues 83–193 (ALSRQMSSGM…SETTIPVNVE (111 aa)) form the sHSP domain.

The protein belongs to the small heat shock protein (HSP20) family. Homooligomer. Homodimer; becomes monomeric upon activation. Heterooligomer.

It localises to the cytoplasm. Its subcellular location is the nucleus. The protein localises to the cytoskeleton. The protein resides in the spindle. Functionally, small heat shock protein which functions as a molecular chaperone probably maintaining denatured proteins in a folding-competent state. Plays a role in stress resistance and actin organization. This Poeciliopsis lucida (Desert topminnow) protein is Heat shock protein beta-1 (hspb1).